Reading from the N-terminus, the 72-residue chain is Hypotensin-1 (72 aa).

Positions 1–24 are cleaved as a signal peptide; that stretch reads MKMMIPVIFSILLLIFSLSSTAMS. The propeptide occupies 25 to 35; that stretch reads LEDEQENMEER. The residue at position 41 (Ser41) is a Phosphoserine. The disordered stretch occupies residues 53-72; sequence ETNAKPPARFDPAAFEKSDD. The propeptide occupies 61–72; that stretch reads RFDPAAFEKSDD.

The protein belongs to the non-disulfide-bridged peptide (NDBP) superfamily. Undergoes enzymatic cleavages by carboxypeptidases, endopeptidases, and aminopeptidases resulting in at least 46 fragments of this protein. Expressed by the venom gland.

Its subcellular location is the secreted. Agonist of the B2 bradykinin receptor (BDKRB2). Potentiates the hypotensive effect of bradykinin (BK) and induces a direct vasorelaxing effect independent of BK, by endothelium- and nitric oxide (NO)-dependent mechanisms in rat aortic ring preparations. Also exerts proangiogenic, antiinflammatory, and antifibrogenic activities. Does not inhibit the angiotensin-converting enzyme (ACE) but increases its activity, and inhibits neprilysin (NEP) in a non-competitive manner. Exerts intermediate cytotoxicity and pro-inflammatory effects on mouse macrophages, and increases the phagocytic activity of these murine cells. Its function is as follows. Presents moderate hemolytic activity at physiological concentrations (micromolar range). Does not induce mast cell degranulation, lactate dehydrogenase (LDH) release from mast cells and antimicrobial effects. In vivo, causes intense pain (but no edema formation), when injected in mice hind paws. Also induces discomfort and anxiety in mice, as it moderately diminishes locomotion and moderately increases rearing behavior. The chain is Hypotensin-1 from Tityus serrulatus (Brazilian scorpion).